We begin with the raw amino-acid sequence, 599 residues long: MKNIRNFSIIAHIDHGKSTLSDRIIQICGGLSDREMAAQVLDSMDLERERGITIKAQSVTLDYKASDGETYQLNFIDTPGHVDFSYEVSRSLAACEGALLVVDAGQGVEAQTLANCYTAMEMDLEVVPVLNKIDLPAADPERVADEIEDIVGIDAHDAVRCSAKTGVGVPDVLERLVRDIPPPEGDPDAPLQALIIDSWFDNYLGVVSLVRIKNGTMRKGDKIKVMSTGQVYNADRLGIFTPKQVDRTELKCGEVGWLVCAIKDILGAPVGDTLTAARNPADKALPGFKKVKPQVYAGLFPVSSDDYENFRDALGKLSLNDASLFYEPESSTALGFGFRCGFLGLLHMEIIQERLEREYDLDLITTAPTVVYEVETTSKEVIYVDSPSKLPPLNNIQELREPIAECHMLLPQEFLGNVITLCIEKRGVQTNMVYHGKQVALTYEIPMAEVVLDFFDRLKSTSRGYASLDYNFKRFQASNMVRVDVLINGERVDALALITHNDNAPYRGRELVEKMKELIPRQQFDIAIQAAIGNHIIARSTVKQLRKNVLAKCYGGDVSRKKKLLQKQKEGKKRMKQVGNVELPQEAFLAILHVGKDGK.

The tr-type G domain occupies 2-184 (KNIRNFSIIA…RLVRDIPPPE (183 aa)). Residues 14–19 (DHGKST) and 131–134 (NKID) each bind GTP.

Belongs to the TRAFAC class translation factor GTPase superfamily. Classic translation factor GTPase family. LepA subfamily.

The protein localises to the cell inner membrane. It carries out the reaction GTP + H2O = GDP + phosphate + H(+). Functionally, required for accurate and efficient protein synthesis under certain stress conditions. May act as a fidelity factor of the translation reaction, by catalyzing a one-codon backward translocation of tRNAs on improperly translocated ribosomes. Back-translocation proceeds from a post-translocation (POST) complex to a pre-translocation (PRE) complex, thus giving elongation factor G a second chance to translocate the tRNAs correctly. Binds to ribosomes in a GTP-dependent manner. This is Elongation factor 4 from Klebsiella pneumoniae (strain 342).